A 540-amino-acid polypeptide reads, in one-letter code: MAAKDVKFSTDARDRMLRGVDILANAVKVTLGPKGRNVVIEKSFGAPRITKDGVTVAKEIELEDKFENMGAQMVREVASKTADLAGDGTTTATVLAQAIVKEGAKSVAAGMNPMDLKRGIDLAVDAIVADLKAHAKKITSNDEIAQVGTISANGDNEIGRFLAEAMQKVGNEGVITVEEAKSLDTELEVVEGMQFDRGYVSPYFVTNSEKMRVELEDPYILIHEKKLSGLQTMLPLLEAVVQSGKPLLIVAEDVEGEALATLVVNKLRGGLKIAAVKAPGFGDRRKAMLEDIAILTGGTTISEDLGIKLENVTLSMLGRAKKVVIDKENTTIVDGAGAKKDIEARTQQIKLQIEETTSDYDREKLQERLAKLAGGVAVIRVGGATEVEVKERKDRVDDALHATRAAVEEGILPGGGVALLRATKVLDGVKTANADQKAGVDIIRRAIQVPVRQIVQNAGEDGSLVVGKLLEKDTYSWGFNAATGEYQDLVQAGVIDPAKVVRTALQDAASVASLLITTEALVADKPKKAEATQAAPAMDF.

Residues 30-33 (TLGP), Lys51, 87-91 (DGTTT), Gly415, 480-482 (NAA), and Asp496 each bind ATP.

It belongs to the chaperonin (HSP60) family. Forms a cylinder of 14 subunits composed of two heptameric rings stacked back-to-back. Interacts with the co-chaperonin GroES.

The protein localises to the cytoplasm. The catalysed reaction is ATP + H2O + a folded polypeptide = ADP + phosphate + an unfolded polypeptide.. Together with its co-chaperonin GroES, plays an essential role in assisting protein folding. The GroEL-GroES system forms a nano-cage that allows encapsulation of the non-native substrate proteins and provides a physical environment optimized to promote and accelerate protein folding. This is Chaperonin GroEL 3 from Bradyrhizobium sp. (strain BTAi1 / ATCC BAA-1182).